The primary structure comprises 97 residues: Acylphosphatase-2 (97 aa).

N-acetylalanine is present on Ala2. The Acylphosphatase-like domain maps to 7–97 (SVDYEVFGTV…LEYSNFSIRY (91 aa)). Active-site residues include Arg22 and Asn40. Position 91 is a phosphoserine (Ser91).

Belongs to the acylphosphatase family.

The catalysed reaction is an acyl phosphate + H2O = a carboxylate + phosphate + H(+). Its physiological role is not yet clear. This is Acylphosphatase-2 (Acyp2) from Rattus norvegicus (Rat).